The sequence spans 38 residues: Large ribosomal subunit protein bL36 (38 aa).

It belongs to the bacterial ribosomal protein bL36 family.

The protein is Large ribosomal subunit protein bL36 of Cellvibrio japonicus (strain Ueda107) (Pseudomonas fluorescens subsp. cellulosa).